The chain runs to 761 residues: Zinc finger protein 711 (761 aa).

Glycyl lysine isopeptide (Lys-Gly) (interchain with G-Cter in SUMO2) cross-links involve residues lysine 224, lysine 235, and lysine 296. 5 consecutive C2H2-type zinc fingers follow at residues 383 to 408 (YPCHICTKKFKSRGFLKRHMKNHPDH), 414 to 436 (YQCTDCDFTTNKKVSFHNHLESH), 476 to 499 (HKCKYCDYETAEQGLLNRHLLAVH), 505 to 527 (HVCVECGKGFRHPSELKKHMRTH), and 533 to 556 (YQCQYCIFRCADQSNLKTHIKSKH). Positions 515-761 (RHPSELKKHM…IMRHHKEALM (247 aa)) are required for transcriptional activation. Residues 562-584 (YKCEHCPQAFGDERELQRHLDLF) form a C2H2-type 6; atypical zinc finger. 3 residues coordinate Zn(2+): cysteine 564, cysteine 567, and histidine 580. 6 consecutive C2H2-type zinc fingers follow at residues 590–613 (HQCPHCDHKSTNSSDLKRHIISVH), 619–641 (HKCEVCDKGFHRPSELKKHSDIH), 647–670 (HQCRHCDFKTSDPFILSGHILSVH), 676–698 (LKCKRCKRGFRQQNELKKHMKTH), 704–727 (YQCEYCEYSTTDASGFKRHVISIH), and 733–755 (HRCEFCKKGFRRPSEKNQHIMRH).

This sequence belongs to the krueppel C2H2-type zinc-finger protein family. Interacts with PHF8. In terms of tissue distribution, expressed in neural tissues.

The protein localises to the nucleus. In terms of biological role, transcription regulator required for brain development. Probably acts as a transcription factor that binds to the promoter of target genes and recruits PHF8 histone demethylase, leading to activated expression of genes involved in neuron development, such as KDM5C. May compete with transcription factor ARX for activation of expression of KDM5C. The polypeptide is Zinc finger protein 711 (ZNF711) (Homo sapiens (Human)).